A 272-amino-acid polypeptide reads, in one-letter code: Transcription factor GAL1 (272 aa).

The segment covering 1–10 (MAGKNMSSRL) has biased composition (polar residues). 3 disordered regions span residues 1-49 (MAGK…SPET), 102-215 (YGAI…SRDI), and 246-272 (KGHL…AMDY). Acidic residues-rich tracts occupy residues 113–122 (ESDDDQDEEQ) and 152–174 (SEQD…DEAE). A compositionally biased stretch (basic and acidic residues) spans 175 to 215 (LLIKAERKEAAAKLRAERKAQRKADEVKSKQMAERRRSRDI). The segment at 240–255 (CHVCGQKGHLQKDCPD) adopts a CCHC-type zinc-finger fold.

The protein localises to the nucleus. Its function is as follows. Transcription factor; part of the gene cluster that mediates the biosynthesis of liamocins, glycolipids (also called heavy oils) composed of a single mannitol or arabitol headgroup linked to either three, four or even six 3,5-dihydroxydecanoic ester tail-groups. Positively regulates the expression of PKS1 and EST1 that mediate the biosynthesis of liamocins. The sequence is that of Transcription factor GAL1 from Aureobasidium melanogenum (Aureobasidium pullulans var. melanogenum).